We begin with the raw amino-acid sequence, 199 residues long: DNA dC-&gt;dU-editing enzyme APOBEC-3A (199 aa).

In terms of domain architecture, CMP/dCMP-type deaminase spans 27–143 (GRHKTYLCYE…PLYKEALQML (117 aa)). Zn(2+) is bound at residue histidine 70. The Proton donor role is filled by glutamate 72. Residues cysteine 101 and cysteine 106 each coordinate Zn(2+).

The protein belongs to the cytidine and deoxycytidylate deaminase family. Interacts with AGO2. Interacts with TRIB3 (via N-terminus). Zn(2+) is required as a cofactor. In terms of tissue distribution, expressed in peripheral leukocytes with higher expression in CD14-positive phagocytic cells. Highly expressed in keratinocytes and in periphery blood monocytes. Also detected in non-lymphoid tissues including lung and adipose tissues. Found at high levels in colorectal adenocarcinoma, Burkitt's lymphoma and chronic myelogenous leukemia.

It localises to the nucleus. The protein localises to the cytoplasm. The catalysed reaction is a 2'-deoxycytidine in single-stranded DNA + H2O + H(+) = a 2'-deoxyuridine in single-stranded DNA + NH4(+). In terms of biological role, DNA deaminase (cytidine deaminase) with restriction activity against viruses, foreign DNA and mobility of retrotransposons. Exhibits antiviral activity against adeno-associated virus (AAV) and human T-cell leukemia virus type 1 (HTLV-1) and may inhibit the mobility of LTR and non-LTR retrotransposons. Selectively targets single-stranded DNA and can deaminate both methylcytosine and cytosine in foreign DNA. Can induce somatic hypermutation in the nuclear and mitochondrial DNA. May also play a role in the epigenetic regulation of gene expression through the process of active DNA demethylation. This Homo sapiens (Human) protein is DNA dC-&gt;dU-editing enzyme APOBEC-3A (APOBEC3A).